The following is a 504-amino-acid chain: Maturase K (504 aa).

The protein belongs to the intron maturase 2 family. MatK subfamily.

It is found in the plastid. It localises to the chloroplast. Usually encoded in the trnK tRNA gene intron. Probably assists in splicing its own and other chloroplast group II introns. The chain is Maturase K from Calyptranthes pallens (Spicewood).